The primary structure comprises 372 residues: Hydrogenase-2 small chain (372 aa).

A signal peptide (tat-type signal) is located at residues 1-37 (MTGDNTLIHSHGINRRDFMKLCAALAATMGLSSKAAA). C59, C62, C157, C191, H229, C232, C257, and C263 together coordinate [4Fe-4S] cluster. 3 residues coordinate [3Fe-4S] cluster: C272, C292, and C295.

This sequence belongs to the [NiFe]/[NiFeSe] hydrogenase small subunit family. In terms of assembly, heterodimer of a large and a small subunit. The cofactor is [4Fe-4S] cluster. It depends on [3Fe-4S] cluster as a cofactor. Post-translationally, predicted to be exported by the Tat system. The position of the signal peptide cleavage has not been experimentally proven.

It localises to the cell membrane. It is found in the periplasm. It carries out the reaction H2 + A = AH2. This is one of three E.coli hydrogenases synthesized in response to different physiological conditions. HYD2 is involved in hydrogen uptake. The sequence is that of Hydrogenase-2 small chain (hybO) from Escherichia coli O157:H7.